Reading from the N-terminus, the 412-residue chain is Palmitoyltransferase ZDHHC11 (412 aa).

Over 1–42 (MDTRSGSQCSVTPEAILNNEKLVLPPRISRVNGWSLPLHYFQ) the chain is Cytoplasmic. A helical membrane pass occupies residues 43–63 (VVTWAVFVGLSSATFGIFIPF). Topologically, residues 64–69 (LPHAWK) are lumenal. A helical transmembrane segment spans residues 70 to 90 (YIAYVVTGGIFSFHLVVHLIA). Over 91–176 (SCIDPADSNV…YWFFFSTVAS (86 aa)) the chain is Cytoplasmic. Positions 125–175 (QFCHLCKVTVNKKTKHCISCNKCVSGFDHHCKWINNCVGSRNYWFFFSTVA) constitute a DHHC domain. Cys155 serves as the catalytic S-palmitoyl cysteine intermediate. The helical transmembrane segment at 177–197 (ATAGMLCLIAILLYVLVQYLV) threads the bilayer. Topologically, residues 198–230 (NPGVLRTDPRYEDVKNMNTWLLFLPLFPVQVQT) are lumenal. The segment at 198-412 (NPGVLRTDPR…MKTDSAESED (215 aa)) is mediates interaction with IRF3 and STING1. The chain crosses the membrane as a helical span at residues 231 to 251 (LIVVIIGMLVLLLDFLGLVHL). The Cytoplasmic portion of the chain corresponds to 252–412 (GQLLIFHIYL…MKTDSAESED (161 aa)). A disordered region spans residues 374 to 412 (HPDGGSMAQEADDAPSISTLGLQQETTEPMKTDSAESED). Residues 389–400 (SISTLGLQQETT) are compositionally biased toward polar residues. Residues 401–412 (EPMKTDSAESED) show a composition bias toward basic and acidic residues.

This sequence belongs to the DHHC palmitoyltransferase family. Interacts with IRF3 and STING1; in presence of DNA viruses recruits IRF3 to STING1 promoting IRF3 phosphorylation and activation. In terms of tissue distribution, expressed in testis.

The protein localises to the endoplasmic reticulum membrane. It catalyses the reaction L-cysteinyl-[protein] + hexadecanoyl-CoA = S-hexadecanoyl-L-cysteinyl-[protein] + CoA. Endoplasmic reticulum-localized palmitoyltransferase that could catalyze the addition of palmitate onto various protein substrates and be involved in a variety of cellular processes. Has a palmitoyltransferase activity toward NCDN and regulates NCDN association with endosome membranes through this palmitoylation. May play a role in cell proliferation. Functionally, also has a palmitoyltransferase activity-independent function in DNA virus-triggered and CGAS-mediated innate immune response. Functions as an adapter that recruits IRF3 to STING1 to promote the activation of that key transcriptional regulator of type I interferon (IFN)-dependent immune response. In Homo sapiens (Human), this protein is Palmitoyltransferase ZDHHC11.